The sequence spans 67 residues: Large ribosomal subunit protein bL35 (67 aa).

Belongs to the bacterial ribosomal protein bL35 family.

The sequence is that of Large ribosomal subunit protein bL35 from Sinorhizobium fredii (strain NBRC 101917 / NGR234).